A 436-amino-acid polypeptide reads, in one-letter code: Xylose isomerase (436 aa).

Residues His100 and Asp103 contribute to the active site. Mg(2+)-binding residues include Glu231, Glu267, His270, Asp295, Asp306, Asp308, and Asp338.

It belongs to the xylose isomerase family. Homotetramer. Mg(2+) is required as a cofactor.

The protein localises to the cytoplasm. The catalysed reaction is alpha-D-xylose = alpha-D-xylulofuranose. This Rhizobium etli (strain ATCC 51251 / DSM 11541 / JCM 21823 / NBRC 15573 / CFN 42) protein is Xylose isomerase.